A 125-amino-acid polypeptide reads, in one-letter code: MSIETLVEEIGKLTLTEASELVKALEEKFGVSAAPAMMAGVMAAAPAGDAPAQEEKTEFDVVLTAAGESKINVIKVVRALTGLGLKEAKDLVDGAPKTVKEGISKDEAEKVAKELKDVGASVELK.

The protein belongs to the bacterial ribosomal protein bL12 family. Homodimer. Part of the ribosomal stalk of the 50S ribosomal subunit. Forms a multimeric L10(L12)X complex, where L10 forms an elongated spine to which 2 to 4 L12 dimers bind in a sequential fashion. Binds GTP-bound translation factors.

Forms part of the ribosomal stalk which helps the ribosome interact with GTP-bound translation factors. Is thus essential for accurate translation. This Chlorobium phaeobacteroides (strain DSM 266 / SMG 266 / 2430) protein is Large ribosomal subunit protein bL12.